The chain runs to 519 residues: MATTSTTGSTLLQPLSNAVQLPIDQVNFVVCQLFALLAAVWFRTYLHSSKTSSFIRHVVATLLGLYLAFFCFGWYALHFLVQSGISYCIMIIAGVESMQQCCFVFALGYLSVCQITRVYIFDYGQYSADFSGPMMIITQKITSLAYEIHDGMFRKDEELTPSQRGLAVRRMPSLLEYVSYTCNFMGILAGPLCSYKDYIAFIEGRASHVAQPSENGKDEQHGKADPSPNAAVTEKLLVCGLSLLFHLTISNMLPVEYNIDEHFQATASWPTKATYLYVSLLAARPKYYFAWTLADAINNAAGFGFRGYDKNGVARWDLISNLRIQQIEMSTSFKMFLDNWNIQTALWLKRVCYERATFSPTIQTFFLSAIWHGVYPGYYLTFLTGVLMTLAARAVRNNFRHYFLEPPQLKLFYDLITWVATQITISYTVVPFVLLSIKPSFTFYSSWYYCLHVCSILVLLLLPVKKSQRRTSTQENVHLSQAKKFDERDNPLGQNSFSTMNNVCNQNRDTGSRHSSLTQ.

Helical transmembrane passes span 22–42 (PIDQVNFVVCQLFALLAAVWF), 61–81 (TLLGLYLAFFCFGWYALHFLV), 88–108 (CIMIIAGVESMQQCCFVFALG), 184–204 (FMGILAGPLCSYKDYIAFIEG), 236–256 (LLVCGLSLLFHLTISNMLPVE), and 263–283 (FQATASWPTKATYLYVSLLAA). Active-site residues include N341 and H372. The next 3 helical transmembrane spans lie at 365 to 385 (FFLSAIWHGVYPGYYLTFLTG), 415 to 435 (LITWVATQITISYTVVPFVLL), and 443 to 463 (FYSSWYYCLHVCSILVLLLLP). Positions 497-519 (FSTMNNVCNQNRDTGSRHSSLTQ) are disordered.

This sequence belongs to the membrane-bound acyltransferase family. Highly expressed in epididymis, brain, testis, and ovary.

The protein localises to the endoplasmic reticulum membrane. It catalyses the reaction a 1-acyl-sn-glycero-3-phosphocholine + an acyl-CoA = a 1,2-diacyl-sn-glycero-3-phosphocholine + CoA. The enzyme catalyses a 1-acyl-sn-glycero-3-phosphoethanolamine + an acyl-CoA = a 1,2-diacyl-sn-glycero-3-phosphoethanolamine + CoA. The catalysed reaction is a 1-O-(1Z-alkenyl)-sn-glycero-3-phosphocholine + (9Z)-octadecenoyl-CoA = 1-O-(1Z)-alkenyl-2-(9Z)-octadecenoyl-sn-glycero-3-phosphocholine + CoA. It carries out the reaction a 1-O-(1Z-alkenyl)-sn-glycero-3-phosphoethanolamine + (9Z)-octadecenoyl-CoA = 1-O-(1Z)-alkenyl-2-(9Z)-octadecenoyl-sn-glycero-3-phosphoethanolamine + CoA. It catalyses the reaction 1-octadecanoyl-sn-glycero-3-phosphoethanolamine + (9Z)-octadecenoyl-CoA = 1-octadecanoyl-2-(9Z-octadecenoyl)-sn-glycero-3-phosphoethanolamine + CoA. The enzyme catalyses 1-octadecanoyl-sn-glycero-3-phosphocholine + (9Z)-octadecenoyl-CoA = 1-octadecanoyl-2-(9Z-octadecenoyl)-sn-glycero-3-phosphocholine + CoA. The catalysed reaction is 1-(9Z-octadecenoyl)-sn-glycero-3-phosphoethanolamine + (9Z)-octadecenoyl-CoA = 1,2-di-(9Z-octadecenoyl)-sn-glycero-3-phosphoethanolamine + CoA. It carries out the reaction 1-hexadecanoyl-sn-glycero-3-phosphoethanolamine + (9Z)-octadecenoyl-CoA = 1-hexadecanoyl-2-(9Z-octadecenoyl)-sn-glycero-3-phosphoethanolamine + CoA. It catalyses the reaction 1-hexadecanoyl-sn-glycero-3-phosphocholine + (9Z)-octadecenoyl-CoA = 1-hexadecanoyl-2-(9Z-octadecenoyl)-sn-glycero-3-phosphocholine + CoA. The enzyme catalyses (9Z)-hexadecenoyl-CoA + 1-hexadecanoyl-sn-glycero-3-phosphocholine = 1-hexadecanoyl-2-(9Z-hexadecenoyl)-sn-glycero-3-phosphocholine + CoA. The catalysed reaction is 1-hexadecanoyl-sn-glycero-3-phosphoethanolamine + (9Z)-hexadecenoyl-CoA = 1-hexadecanoyl-2-(9Z)-hexadecenoyl-sn-glycero-3-phosphoethanolamine + CoA. It carries out the reaction (9Z,12Z)-octadecadienoyl-CoA + 1-hexadecanoyl-sn-glycero-3-phosphocholine = 1-hexadecanoyl-2-(9Z,12Z-octadecadienoyl)-sn-glycero-3-phosphocholine + CoA. Its pathway is lipid metabolism; phospholipid metabolism. Partially inhibited by thimerosal. Acyltransferase which catalyzes the transfer of an acyl group from an acyl-CoA to a lysophospholipid leading to the production of a phospholipid and participates in the reacylation step of the phospholipid remodeling pathway also known as the Lands cycle. Catalyzes the acylation of lysophosphatidylcholine (1-acyl-sn-glycero-3-phosphocholine or LPC) and to a lesser extend lysophosphatidylethanolamine (1-acyl-sn-glycero-3-phosphoethanolamine or LPE). Does not acylates lysophosphatidic acid (LPA) and lysophosphatidylserine. Prefers oleoyl-CoA as the acyl donor. May be involved in chondrocyte differentiation. This Mus musculus (Mouse) protein is Membrane-bound glycerophospholipid O-acyltransferase 2.